A 721-amino-acid polypeptide reads, in one-letter code: MSPHQTTGQESDNMTVNGENAQASSQYIQSNEEMTSAIATEKKASTAKAAKDPSRPKRKKAKRACYACQRGHLTCGDERPCQRCIKRGFQDACHDGVRKKAKYLHDAPNEALMAGVGATLYNQRNAAQNNANGSNTSPGAPQQITSPNFYNTQQSPDYNGFPQNKTELQDSTVGPDNYASQSPVSPTYQISQGLSTQGLSPSLPQSTSETPSAANPAPGQFNSAFFDPSDPALFNFDLASMNFGNHYGALEFGMLGHMATGVGDTPPSESGAQRGSIGQNGSGTFGLTGSNFSESPSNQAPYLFSESGMNDWTQTAPVNRRSMYGSNANLVAGNMSDKPHAFAIESAPANFASPASNESPMMTTSSATFEDTTNSGAFNSRQNVPVSQQRQQPVVSTPQLKQQNLNLGSRRRHKNASSIYDSVKDPYSYTSGFHSLTAFIQRRFSPQKTLRIAKALASIRPSFIATTKTLNRDDLIFMEKCFQRTLWEYEDFINACGTPTIVCRRTGEIAAVGKEFSILTGWKKEVLLGKEPNHNVNTGGSSGLMTGSTSRGSYTPRPYSSEVYNSSATATPRTQPVFLAELLDDDSVIEFYEDFAKLAFGDSRGSVMTTCKLLKYKTKAESDILAGSNGEADAGLNGEAASNETNELNGSLTNGATTNGRGQRRWGKGEIAGEAGMNQLGFRDGKVECSYCWTVKRDVFDIPMLIVMNVSCLCLEPLSEP.

A compositionally biased stretch (polar residues) spans 1–34 (MSPHQTTGQESDNMTVNGENAQASSQYIQSNEEM). A disordered region spans residues 1–62 (MSPHQTTGQE…PSRPKRKKAK (62 aa)). Positions 40–55 (TEKKASTAKAAKDPSR) are enriched in basic and acidic residues. The segment at residues 65 to 93 (CYACQRGHLTCGDERPCQRCIKRGFQDAC) is a DNA-binding region (zn(2)-C6 fungal-type). Disordered regions lie at residues 128 to 224 (QNNA…FNSA), 263 to 300 (GDTP…SNQA), 353 to 400 (SPAS…TPQL), 533 to 567 (NHNV…YNSS), and 635 to 666 (GLNG…QRRW). 4 stretches are compositionally biased toward polar residues: residues 133-213 (GSNT…TPSA), 267-277 (PSESGAQRGSI), 287-300 (LTGS…SNQA), and 361-379 (MMTT…GAFN). Composition is skewed to low complexity over residues 380–399 (SRQN…STPQ) and 543–553 (GLMTGSTSRGS). A compositionally biased stretch (polar residues) spans 640–661 (AASNETNELNGSLTNGATTNGR).

It belongs to the ERT1/acuK family.

The protein localises to the nucleus. In terms of biological role, transcription factor which regulates nonfermentable carbon utilization. Activator of gluconeogenetic genes. The sequence is that of Transcription activator of gluconeogenesis ARB_05058 from Arthroderma benhamiae (strain ATCC MYA-4681 / CBS 112371) (Trichophyton mentagrophytes).